Here is a 1235-residue protein sequence, read N- to C-terminus: ATP-dependent helicase/nuclease subunit A (1235 aa).

Residues Thr-12 to Arg-482 form the UvrD-like helicase ATP-binding domain. ATP is bound at residue Ala-33 to Thr-40. Positions Ala-509–Gly-800 constitute a UvrD-like helicase C-terminal domain.

It belongs to the helicase family. AddA subfamily. In terms of assembly, heterodimer of AddA and AddB/RexB. Mg(2+) is required as a cofactor.

It carries out the reaction Couples ATP hydrolysis with the unwinding of duplex DNA by translocating in the 3'-5' direction.. The catalysed reaction is ATP + H2O = ADP + phosphate + H(+). In terms of biological role, the heterodimer acts as both an ATP-dependent DNA helicase and an ATP-dependent, dual-direction single-stranded exonuclease. Recognizes the chi site generating a DNA molecule suitable for the initiation of homologous recombination. The AddA nuclease domain is required for chi fragment generation; this subunit has the helicase and 3' -&gt; 5' nuclease activities. The sequence is that of ATP-dependent helicase/nuclease subunit A from Listeria welshimeri serovar 6b (strain ATCC 35897 / DSM 20650 / CCUG 15529 / CIP 8149 / NCTC 11857 / SLCC 5334 / V8).